We begin with the raw amino-acid sequence, 101 residues long: Chaperone modulatory protein CbpM (101 aa).

This sequence belongs to the CbpM family.

Functionally, interacts with CbpA and inhibits both the DnaJ-like co-chaperone activity and the DNA binding activity of CbpA. Together with CbpA, modulates the activity of the DnaK chaperone system. Does not inhibit the co-chaperone activity of DnaJ. The protein is Chaperone modulatory protein CbpM of Salmonella agona (strain SL483).